A 282-amino-acid chain; its full sequence is Probable endonuclease 4 (282 aa).

9 residues coordinate Zn(2+): H69, H109, E145, D179, H182, H216, D229, H231, and E261.

This sequence belongs to the AP endonuclease 2 family. Zn(2+) serves as cofactor.

It carries out the reaction Endonucleolytic cleavage to 5'-phosphooligonucleotide end-products.. In terms of biological role, endonuclease IV plays a role in DNA repair. It cleaves phosphodiester bonds at apurinic or apyrimidinic (AP) sites, generating a 3'-hydroxyl group and a 5'-terminal sugar phosphate. The sequence is that of Probable endonuclease 4 from Edwardsiella ictaluri (strain 93-146).